The sequence spans 330 residues: tRNA U34 carboxymethyltransferase (330 aa).

Residues Lys-91, Trp-105, Lys-110, Gly-130, Asp-152–Ser-154, Ile-181–Glu-182, Met-196, Tyr-200, and Arg-315 contribute to the carboxy-S-adenosyl-L-methionine site.

The protein belongs to the class I-like SAM-binding methyltransferase superfamily. CmoB family. In terms of assembly, homotetramer.

The enzyme catalyses carboxy-S-adenosyl-L-methionine + 5-hydroxyuridine(34) in tRNA = 5-carboxymethoxyuridine(34) in tRNA + S-adenosyl-L-homocysteine + H(+). Its function is as follows. Catalyzes carboxymethyl transfer from carboxy-S-adenosyl-L-methionine (Cx-SAM) to 5-hydroxyuridine (ho5U) to form 5-carboxymethoxyuridine (cmo5U) at position 34 in tRNAs. This Shewanella frigidimarina (strain NCIMB 400) protein is tRNA U34 carboxymethyltransferase.